The sequence spans 272 residues: 3-methyl-2-oxobutanoate hydroxymethyltransferase (272 aa).

Residues aspartate 42 and aspartate 86 each contribute to the Mg(2+) site. Residues aspartate 42–serine 43, aspartate 86, and lysine 116 each bind 3-methyl-2-oxobutanoate. Glutamate 118 contacts Mg(2+). Glutamate 185 functions as the Proton acceptor in the catalytic mechanism.

This sequence belongs to the PanB family. As to quaternary structure, homodecamer; pentamer of dimers. Mg(2+) serves as cofactor.

The protein localises to the cytoplasm. The catalysed reaction is 3-methyl-2-oxobutanoate + (6R)-5,10-methylene-5,6,7,8-tetrahydrofolate + H2O = 2-dehydropantoate + (6S)-5,6,7,8-tetrahydrofolate. The protein operates within cofactor biosynthesis; (R)-pantothenate biosynthesis; (R)-pantoate from 3-methyl-2-oxobutanoate: step 1/2. Catalyzes the reversible reaction in which hydroxymethyl group from 5,10-methylenetetrahydrofolate is transferred onto alpha-ketoisovalerate to form ketopantoate. The protein is 3-methyl-2-oxobutanoate hydroxymethyltransferase of Prochlorococcus marinus (strain NATL1A).